Reading from the N-terminus, the 511-residue chain is Histidine ammonia-lyase (511 aa).

A cross-link (5-imidazolinone (Ala-Gly)) is located at residues 142–144 (ASG). The residue at position 143 (Ser143) is a 2,3-didehydroalanine (Ser).

This sequence belongs to the PAL/histidase family. Post-translationally, contains an active site 4-methylidene-imidazol-5-one (MIO), which is formed autocatalytically by cyclization and dehydration of residues Ala-Ser-Gly.

It is found in the cytoplasm. The enzyme catalyses L-histidine = trans-urocanate + NH4(+). The protein operates within amino-acid degradation; L-histidine degradation into L-glutamate; N-formimidoyl-L-glutamate from L-histidine: step 1/3. In Brucella abortus (strain S19), this protein is Histidine ammonia-lyase.